The primary structure comprises 672 residues: DNA ligase (672 aa).

NAD(+)-binding positions include Asp-35–Asp-39, Ser-84–Leu-85, and Glu-116. The active-site N6-AMP-lysine intermediate is the Lys-118. NAD(+) contacts are provided by Arg-139, Glu-179, Lys-295, and Lys-319. Zn(2+) contacts are provided by Cys-413, Cys-416, Cys-431, and Cys-436. In terms of domain architecture, BRCT spans Pro-593–Ile-672.

This sequence belongs to the NAD-dependent DNA ligase family. LigA subfamily. It depends on Mg(2+) as a cofactor. The cofactor is Mn(2+).

It catalyses the reaction NAD(+) + (deoxyribonucleotide)n-3'-hydroxyl + 5'-phospho-(deoxyribonucleotide)m = (deoxyribonucleotide)n+m + AMP + beta-nicotinamide D-nucleotide.. Functionally, DNA ligase that catalyzes the formation of phosphodiester linkages between 5'-phosphoryl and 3'-hydroxyl groups in double-stranded DNA using NAD as a coenzyme and as the energy source for the reaction. It is essential for DNA replication and repair of damaged DNA. The protein is DNA ligase of Syntrophus aciditrophicus (strain SB).